Here is a 334-residue protein sequence, read N- to C-terminus: Ornithine carbamoyltransferase (334 aa).

Carbamoyl phosphate contacts are provided by residues 56-59 (STRT), Q83, R107, and 134-137 (HPTQ). L-ornithine contacts are provided by residues N168, D232, and 236 to 237 (SM). Carbamoyl phosphate-binding positions include 274–275 (CL) and R320.

This sequence belongs to the aspartate/ornithine carbamoyltransferase superfamily. OTCase family.

The protein localises to the cytoplasm. The enzyme catalyses carbamoyl phosphate + L-ornithine = L-citrulline + phosphate + H(+). The protein operates within amino-acid biosynthesis; L-arginine biosynthesis; L-arginine from L-ornithine and carbamoyl phosphate: step 1/3. Its function is as follows. Reversibly catalyzes the transfer of the carbamoyl group from carbamoyl phosphate (CP) to the N(epsilon) atom of ornithine (ORN) to produce L-citrulline. This Shigella dysenteriae serotype 1 (strain Sd197) protein is Ornithine carbamoyltransferase.